An 85-amino-acid chain; its full sequence is Putative membrane protein insertion efficiency factor (85 aa).

It belongs to the UPF0161 family.

The protein localises to the cell inner membrane. In terms of biological role, could be involved in insertion of integral membrane proteins into the membrane. The sequence is that of Putative membrane protein insertion efficiency factor from Fervidobacterium nodosum (strain ATCC 35602 / DSM 5306 / Rt17-B1).